A 334-amino-acid polypeptide reads, in one-letter code: Glycerol-3-phosphate dehydrogenase [NAD(P)+] (334 aa).

The NADPH site is built by tryptophan 13, arginine 33, and lysine 106. Sn-glycerol 3-phosphate is bound by residues lysine 106, glycine 137, and serine 139. Alanine 141 is a binding site for NADPH. Residues lysine 192, aspartate 245, serine 255, arginine 256, and asparagine 257 each coordinate sn-glycerol 3-phosphate. The active-site Proton acceptor is the lysine 192. Arginine 256 serves as a coordination point for NADPH. Residues valine 280 and glutamate 282 each contribute to the NADPH site.

It belongs to the NAD-dependent glycerol-3-phosphate dehydrogenase family.

Its subcellular location is the cytoplasm. The enzyme catalyses sn-glycerol 3-phosphate + NAD(+) = dihydroxyacetone phosphate + NADH + H(+). It catalyses the reaction sn-glycerol 3-phosphate + NADP(+) = dihydroxyacetone phosphate + NADPH + H(+). The protein operates within membrane lipid metabolism; glycerophospholipid metabolism. Functionally, catalyzes the reduction of the glycolytic intermediate dihydroxyacetone phosphate (DHAP) to sn-glycerol 3-phosphate (G3P), the key precursor for phospholipid synthesis. The chain is Glycerol-3-phosphate dehydrogenase [NAD(P)+] from Chlamydia trachomatis serovar L2b (strain UCH-1/proctitis).